The primary structure comprises 272 residues: MTLQEQIMKALHVQPVIDPKAEIRKRVDFLKDYVKKTGAKGFVLGISGGQDSTLAGRLAQLAVEEIRNEGGNATFIAVRLPYKVQKDEDDAQLALQFIQADQSVAFDIASTVDAFSNQYENLLGESLTDFNKGNVKARIRMVTQYAIGGQNSLLVIGTDHAAEAVTGFFTKFGDGGADLLPLTGLTKRQGRALLQELGADERLYLKMPTADLLDEKPGQADETELGITYDQLDDYLEGKAVPTDVAEKIEKRYTVSEHKRQVPASMFDDWWK.

An ATP-binding site is contributed by 45-52 (GISGGQDS). Aspartate 51 is a binding site for Mg(2+). Arginine 138 lines the deamido-NAD(+) pocket. Threonine 158 serves as a coordination point for ATP. Residue glutamate 163 participates in Mg(2+) binding. Deamido-NAD(+) contacts are provided by lysine 171 and aspartate 178. The ATP site is built by lysine 187 and threonine 209. 258-259 (HK) provides a ligand contact to deamido-NAD(+).

The protein belongs to the NAD synthetase family. Homodimer.

It catalyses the reaction deamido-NAD(+) + NH4(+) + ATP = AMP + diphosphate + NAD(+) + H(+). The protein operates within cofactor biosynthesis; NAD(+) biosynthesis; NAD(+) from deamido-NAD(+) (ammonia route): step 1/1. In terms of biological role, catalyzes the ATP-dependent amidation of deamido-NAD to form NAD. Uses ammonia as a nitrogen source. This is NH(3)-dependent NAD(+) synthetase from Bacillus cereus (strain ATCC 10987 / NRS 248).